Reading from the N-terminus, the 177-residue chain is Nucleoside triphosphate/diphosphate phosphatase (177 aa).

R23 functions as the Proton donor in the catalytic mechanism. The Mg(2+) site is built by N87, D103, D105, D107, D120, and E123.

The protein belongs to the Ntdp family. Requires Mg(2+) as cofactor.

It carries out the reaction a ribonucleoside 5'-triphosphate + H2O = a ribonucleoside 5'-diphosphate + phosphate + H(+). The enzyme catalyses a ribonucleoside 5'-diphosphate + H2O = a ribonucleoside 5'-phosphate + phosphate + H(+). Its function is as follows. Has nucleoside phosphatase activity towards nucleoside triphosphates and nucleoside diphosphates. The protein is Nucleoside triphosphate/diphosphate phosphatase of Streptococcus pneumoniae serotype 2 (strain D39 / NCTC 7466).